The primary structure comprises 204 residues: Imidazoleglycerol-phosphate dehydratase (204 aa).

Belongs to the imidazoleglycerol-phosphate dehydratase family.

The protein localises to the cytoplasm. It catalyses the reaction D-erythro-1-(imidazol-4-yl)glycerol 3-phosphate = 3-(imidazol-4-yl)-2-oxopropyl phosphate + H2O. It functions in the pathway amino-acid biosynthesis; L-histidine biosynthesis; L-histidine from 5-phospho-alpha-D-ribose 1-diphosphate: step 6/9. The chain is Imidazoleglycerol-phosphate dehydratase from Rhodococcus jostii (strain RHA1).